Consider the following 212-residue polypeptide: ATP-dependent dethiobiotin synthetase BioD (212 aa).

Residue 12-17 (DCGKTF) coordinates ATP. Residue Thr-16 participates in Mg(2+) binding. Lys-33 is an active-site residue. Residue Ser-37 participates in substrate binding. ATP contacts are provided by residues Asp-50, 110–113 (EGAG), and 170–171 (NC). Mg(2+) is bound by residues Asp-50 and Glu-110.

Belongs to the dethiobiotin synthetase family. As to quaternary structure, homodimer. Requires Mg(2+) as cofactor.

It localises to the cytoplasm. The catalysed reaction is (7R,8S)-7,8-diammoniononanoate + CO2 + ATP = (4R,5S)-dethiobiotin + ADP + phosphate + 3 H(+). The protein operates within cofactor biosynthesis; biotin biosynthesis; biotin from 7,8-diaminononanoate: step 1/2. Catalyzes a mechanistically unusual reaction, the ATP-dependent insertion of CO2 between the N7 and N8 nitrogen atoms of 7,8-diaminopelargonic acid (DAPA, also called 7,8-diammoniononanoate) to form a ureido ring. The polypeptide is ATP-dependent dethiobiotin synthetase BioD (Legionella pneumophila subsp. pneumophila (strain Philadelphia 1 / ATCC 33152 / DSM 7513)).